Reading from the N-terminus, the 33-residue chain is Cytochrome b6-f complex subunit 5 (33 aa).

Residues 5 to 25 form a helical membrane-spanning segment; that stretch reads LLFGIILGLISCVLAGLFVSA.

The protein belongs to the PetG family. In terms of assembly, the 4 large subunits of the cytochrome b6-f complex are cytochrome b6, subunit IV (17 kDa polypeptide, PetD), cytochrome f and the Rieske protein, while the 4 small subunits are PetG, PetL, PetM and PetN. The complex functions as a dimer.

Its subcellular location is the plastid. The protein resides in the chloroplast thylakoid membrane. Functionally, component of the cytochrome b6-f complex, which mediates electron transfer between photosystem II (PSII) and photosystem I (PSI), cyclic electron flow around PSI, and state transitions. PetG is required for either the stability or assembly of the cytochrome b6-f complex. This is Cytochrome b6-f complex subunit 5 from Bigelowiella natans (Pedinomonas minutissima).